Consider the following 237-residue polypeptide: CD99 antigen-like protein 2 (237 aa).

An N-terminal signal peptide occupies residues 1–25 (MVARLTAFLVCLVFSLATLVQRGYG). Over 26 to 161 (DTDGFNLEDA…PGSGISTETG (136 aa)) the chain is Extracellular. Residues 47–157 (DHFSTTTRRP…SNDDPGSGIS (111 aa)) are disordered. 2 stretches are compositionally biased toward low complexity: residues 51–66 (TTTR…ANPA) and 74–84 (TTTTRRPGTTR). The segment covering 102-111 (DDRNDLDGPK) has biased composition (basic and acidic residues). Serine 154 carries an O-linked (Xyl...) (chondroitin sulfate) serine glycan. Residues 162 to 182 (TIAGVASALAMALIGAVSSYI) form a helical membrane-spanning segment. Topologically, residues 183–237 (SYQQKKFCFSIQQGLNADYVKGENLEAVVCEEPQVTYSKQETQSAEPPPPEPPRI) are cytoplasmic. Positions 218–227 (TYSKQETQSA) are enriched in polar residues. The interval 218 to 237 (TYSKQETQSAEPPPPEPPRI) is disordered. The segment covering 228-237 (EPPPPEPPRI) has biased composition (pro residues).

Belongs to the CD99 family. O-glycosylated. Highly expressed in the nervous system, including brain, dentate nucleus of hippocampus, granular and Purkinje cells of cerebellum, brain stem nucleus and choroid plexus. Expressed in peripheral blood T- and B-cells and neutrophils (at protein level). Almost undetectable in bone marrow-derived neutrophils (at protein level). Also expressed in thymocytes (at protein level) with higher expression in cortical thymocytes than in medullary thymocytes. Expressed at high levels in testis (mostly in germ cells and Sertoli cells) and ovary (mostly in granulosa cells). Expressed in lung, heart, kidney and liver (at protein level); however, expression in heart, kidney and liver seems restricted to endothelial cells (at protein level). Highly expressed in endothelial cells and to a lower level in vascular smooth muscle cells (at protein level). Low expression in spleen.

The protein resides in the cell membrane. Its subcellular location is the cell junction. The protein localises to the secreted. Its function is as follows. Plays a role in a late step of leukocyte extravasation helping cells to overcome the endothelial basement membrane. Acts at the same site as, but independently of, PECAM1. Homophilic adhesion molecule, but these interactions may not be required for cell aggregation. This is CD99 antigen-like protein 2 (Cd99l2) from Mus musculus (Mouse).